Here is a 361-residue protein sequence, read N- to C-terminus: Probable S-adenosylmethionine-dependent methyltransferase At5g38780 (361 aa).

S-adenosyl-L-homocysteine-binding residues include Y19, C64, N69, D106, L107, S135, and F136. Positions 174, 260, 262, and 263 each coordinate Mg(2+).

This sequence belongs to the methyltransferase superfamily. Type-7 methyltransferase family. In terms of assembly, homodimer. Requires Mg(2+) as cofactor.

The polypeptide is Probable S-adenosylmethionine-dependent methyltransferase At5g38780 (Arabidopsis thaliana (Mouse-ear cress)).